A 505-amino-acid polypeptide reads, in one-letter code: NADH-quinone oxidoreductase subunit N (505 aa).

Helical transmembrane passes span 20 to 40 (ALAPELVLLVTAVCLMLGDLF), 59 to 79 (ALALTLSMNFSGGATAFGGVF), 83 to 103 (GLAAAFKVVCLAALGLTALMS), 115 to 135 (GEYYSLMAFSTLGMCVMVSAG), 137 to 157 (AIVLYLGLELMALPIYALVAL), 172 to 192 (FLMGSFASALLLFGLSILYGL), 220 to 240 (AVVALGLVLAGLGFKVATVPF), 251 to 271 (APTTVTAFMSVAAKTASFAVL), 285 to 305 (LWSDALAGLAVLTMLLGNIAA), 314 to 334 (MLAYSAIAHAGYALLGLAACT), 342 to 362 (AAYLTIYLCMNIGAFAVIIYL), 394 to 414 (LAAVMLVFLFSLTGIPPTAGF), 431 to 451 (ITVVVAVVCSTISAWYYLGVA), and 481 to 501 (AVCLAGAVLWGIFPQSLLFWI).

Belongs to the complex I subunit 2 family. In terms of assembly, NDH-1 is composed of 14 different subunits. Subunits NuoA, H, J, K, L, M, N constitute the membrane sector of the complex.

It localises to the cell inner membrane. The catalysed reaction is a quinone + NADH + 5 H(+)(in) = a quinol + NAD(+) + 4 H(+)(out). In terms of biological role, NDH-1 shuttles electrons from NADH, via FMN and iron-sulfur (Fe-S) centers, to quinones in the respiratory chain. The immediate electron acceptor for the enzyme in this species is believed to be ubiquinone. Couples the redox reaction to proton translocation (for every two electrons transferred, four hydrogen ions are translocated across the cytoplasmic membrane), and thus conserves the redox energy in a proton gradient. The chain is NADH-quinone oxidoreductase subunit N from Desulfovibrio desulfuricans (strain ATCC 27774 / DSM 6949 / MB).